The following is a 190-amino-acid chain: Thiamine biosynthesis protein X (190 aa).

The first 22 residues, 1–22 (MSISRTVFGIAATAALSAALVA), serve as a signal peptide directing secretion. A lipid anchor (N-palmitoyl cysteine) is attached at C23. Residue C23 is the site of S-diacylglycerol cysteine attachment. The interval 43 to 68 (SQNPTSASSTSTSSATTTSSAPVEED) is disordered. Residues 47–63 (TSASSTSTSSATTTSSA) are compositionally biased toward low complexity.

The protein resides in the cell membrane. In terms of biological role, is necessary for biosynthesis of the 4-methyl-5-(beta-hydroxyethyl)thiazol component from which thiamine is formed. In Corynebacterium glutamicum (strain ATCC 13032 / DSM 20300 / JCM 1318 / BCRC 11384 / CCUG 27702 / LMG 3730 / NBRC 12168 / NCIMB 10025 / NRRL B-2784 / 534), this protein is Thiamine biosynthesis protein X (thiX).